The chain runs to 40 residues: uncharacterized protein (40 aa).

The N-terminal stretch at 1–17 (MAVAALAMYGGTCGACA) is a signal peptide.

This is an uncharacterized protein from Archaeoglobus fulgidus (strain ATCC 49558 / DSM 4304 / JCM 9628 / NBRC 100126 / VC-16).